A 232-amino-acid polypeptide reads, in one-letter code: RNA chaperone ProQ (232 aa).

The interval 105-182 (EAKARVQAQR…REEQHTPVSD (78 aa)) is disordered. Residues 117 to 136 (QQAKKREAAAAAGEKEDAPR) are compositionally biased toward basic and acidic residues. The span at 137–146 (RERKPRPTTP) shows a compositional bias: basic residues. The span at 147-177 (RRKEGAERKPRSQKPVEKAPKTVKAPREEQH) shows a compositional bias: basic and acidic residues.

Belongs to the ProQ family.

It localises to the cytoplasm. Its function is as follows. RNA chaperone with significant RNA binding, RNA strand exchange and RNA duplexing activities. May regulate ProP activity through an RNA-based, post-transcriptional mechanism. The sequence is that of RNA chaperone ProQ from Escherichia coli (strain UTI89 / UPEC).